The primary structure comprises 1009 residues: Dihydropyrimidine dehydrogenase [NADP(+)] (1009 aa).

The 4Fe-4S ferredoxin-type 1 domain occupies R69–F99. [4Fe-4S] cluster is bound by residues C78, C81, C86, and C90. V128 lines the FAD pocket. [4Fe-4S] cluster is bound by residues C129, C135, C139, and Q155. FAD contacts are provided by residues G193–T197, E217–L225, R234, and L260. Residues A339 to T342, R363 to R364, R370, A436 to G438, and D479 to G484 contribute to the NADP(+) site. G478–T486 lines the FAD pocket. FMN contacts are provided by residues S548 and K572–T573. Residues N607 and N666–S668 each bind substrate. Catalysis depends on C669, which acts as the Proton acceptor. K707 provides a ligand contact to FMN. Substrate is bound at residue N734 to T735. FMN-binding positions include G765, T791–G793, and C814–S815. 2 consecutive 4Fe-4S ferredoxin-type domains span residues V932 to K964 and T965 to R995. Residues C941, C944, C947, C951, C974, C977, C980, and C984 each coordinate [4Fe-4S] cluster.

It belongs to the dihydropyrimidine dehydrogenase family. As to quaternary structure, homodimer. [4Fe-4S] cluster serves as cofactor. The cofactor is FAD. It depends on FMN as a cofactor.

It localises to the cytoplasm. The catalysed reaction is 5,6-dihydrouracil + NADP(+) = uracil + NADPH + H(+). The protein operates within amino-acid biosynthesis; beta-alanine biosynthesis. Involved in pyrimidine base degradation. Catalyzes the reduction of uracil and thymine. This is Dihydropyrimidine dehydrogenase [NADP(+)] (pyd1) from Dictyostelium discoideum (Social amoeba).